The following is a 349-amino-acid chain: Core protein VP7 (349 aa).

N-linked (GlcNAc...) asparagine; by host glycosylation occurs at Asn-287.

It belongs to the orbivirus VP7 family. In terms of assembly, homotrimer that assemble in a complex of 260 capsomers on an inner scaffold composed of VP3.

Its subcellular location is the virion. The VP7 protein is one of the five proteins (with VP1, VP3, VP4, and VP6) which form the inner capsid of the virus. This Bluetongue virus 1 (isolate Australia) (BTV 1) protein is Core protein VP7 (Segment-7).